The primary structure comprises 80 residues: Conotoxin Vi6.2 (80 aa).

An N-terminal signal peptide occupies residues 1 to 22 (MKLTCVLITTVLFLTASQLITA). A propeptide spanning residues 23-47 (DYSRDKRQYRAVRLRDEMRNFKGAR) is cleaved from the precursor. Disulfide bonds link Cys-49-Cys-62, Cys-56-Cys-67, and Cys-61-Cys-77. 4-hydroxyproline is present on residues Pro-60 and Pro-63.

The protein belongs to the conotoxin O1 superfamily. As to expression, expressed by the venom duct.

It is found in the secreted. In terms of biological role, ion channel inhibitor that inhibits the increase in intracellular calcium upon depolarization in DRG neurons. In vivo, both intraperitoneal and intracranial injections into mice induce hyperactivity. The sequence is that of Conotoxin Vi6.2 from Conus virgo (Virgin cone).